The following is a 234-amino-acid chain: O-antigen biosynthesis glycosyltransferase WbnI (234 aa).

Residues 8–13 (ICTGEY), 93–95 (NAV), and 115–118 (HPGY) contribute to the substrate site. The active-site Nucleophile is the Glu-185.

Belongs to the glycosyltransferase 6 family. It depends on Mn(2+) as a cofactor.

The enzyme catalyses alpha-L-Fuc-(1-&gt;2)-beta-D-Gal-(1-&gt;3)-alpha-D-GalNAc-(1-&gt;3)-alpha-D-GalNAc-di-trans,octa-cis-undecaprenyl diphosphate + UDP-alpha-D-galactose = alpha-L-Fuc-(1-&gt;2)-[alpha-D-Gal-(1-&gt;3)]-beta-D-Gal-(1-&gt;3)-alpha-D-GalNAc-(1-&gt;3)-alpha-D-GalNAc-di-trans,octa-cis-undecaprenyl diphosphate + UDP + H(+). It participates in bacterial outer membrane biogenesis; LPS O-antigen biosynthesis. Its function is as follows. Involved in the assembly of the O-repeating unit during O-antigen biosynthesis. The sequence is that of O-antigen biosynthesis glycosyltransferase WbnI from Escherichia coli.